The primary structure comprises 283 residues: Polyamine aminopropyltransferase (283 aa).

Residues 5 to 238 (TTWIDEYQKG…GIWSWTFASK (234 aa)) form the PABS domain. An S-methyl-5'-thioadenosine-binding site is contributed by Gln-32. Residues His-63 and Asp-87 each coordinate spermidine. S-methyl-5'-thioadenosine is bound by residues Glu-107 and 139 to 140 (DG). The Proton acceptor role is filled by Asp-158. 158–161 (DCSD) serves as a coordination point for spermidine.

It belongs to the spermidine/spermine synthase family. In terms of assembly, homodimer or homotetramer.

Its subcellular location is the cytoplasm. It carries out the reaction S-adenosyl 3-(methylsulfanyl)propylamine + putrescine = S-methyl-5'-thioadenosine + spermidine + H(+). It participates in amine and polyamine biosynthesis; spermidine biosynthesis; spermidine from putrescine: step 1/1. Functionally, catalyzes the irreversible transfer of a propylamine group from the amino donor S-adenosylmethioninamine (decarboxy-AdoMet) to putrescine (1,4-diaminobutane) to yield spermidine. The sequence is that of Polyamine aminopropyltransferase from Prochlorococcus marinus (strain MIT 9515).